Consider the following 61-residue polypeptide: Large ribosomal subunit protein bL32 (61 aa).

Positions 1–19 (MAHPKRRQSKTRTAKRRTH) are enriched in basic residues. The interval 1-20 (MAHPKRRQSKTRTAKRRTHD) is disordered.

Belongs to the bacterial ribosomal protein bL32 family.

In Bacteroides fragilis (strain YCH46), this protein is Large ribosomal subunit protein bL32.